A 169-amino-acid polypeptide reads, in one-letter code: Thaumatin-like pathogenesis-related protein 2 (169 aa).

Residues M1 to A21 form the signal peptide.

It belongs to the thaumatin family.

Associated with resistance against stem rust fungi. This Avena sativa (Oat) protein is Thaumatin-like pathogenesis-related protein 2 (RASTL-2).